The primary structure comprises 188 residues: MSKAGASLATCYGPVSADVMAKAENIRLLILDVDGVLSDGLIYMGNNGEELKAFNVRDGYGIRCALTSDIEVAIITGRKAKLVEDRCATLGITHLYQGQSNKLIAFSDLLEKLAIAPENVAYVGDDLIDWPVMEKVGLSVAVADAHPLLIPRADYVTRIAGGRGAVREVCDLLLLAQGKLDEAKGQSI.

Residues Asp32 and Asp34 each coordinate Mg(2+). Substrate is bound by residues Asp34, 55–59 (NVRDG), Arg63, Arg78, Arg86, and Lys102. Asp125 is a Mg(2+) binding site.

In terms of assembly, homotetramer. Mg(2+) is required as a cofactor. Co(2+) serves as cofactor.

It catalyses the reaction 3-deoxy-alpha-D-manno-2-octulosonate-8-phosphate + H2O = 3-deoxy-alpha-D-manno-oct-2-ulosonate + phosphate. It functions in the pathway carbohydrate biosynthesis; 3-deoxy-D-manno-octulosonate biosynthesis; 3-deoxy-D-manno-octulosonate from D-ribulose 5-phosphate: step 3/3. It participates in bacterial outer membrane biogenesis; lipopolysaccharide biosynthesis. Its activity is regulated as follows. Inhibited by calcium, cadmium, mercury, and copper ions. In terms of biological role, catalyzes the hydrolysis of 3-deoxy-D-manno-octulosonate 8-phosphate (KDO 8-P) to 3-deoxy-D-manno-octulosonate (KDO) and inorganic phosphate. The sequence is that of 3-deoxy-D-manno-octulosonate 8-phosphate phosphatase KdsC from Escherichia coli (strain B / BL21-DE3).